A 203-amino-acid polypeptide reads, in one-letter code: GTP cyclohydrolase-2 (203 aa).

49–53 (RIHSE) serves as a coordination point for GTP. Zn(2+)-binding residues include Cys-54, Cys-65, and Cys-67. GTP-binding positions include Gln-70, 92 to 94 (EGR), and Thr-114. The active-site Proton acceptor is Asp-126. The active-site Nucleophile is the Arg-128. The GTP site is built by Thr-149 and Lys-154.

The protein belongs to the GTP cyclohydrolase II family. The cofactor is Zn(2+).

It carries out the reaction GTP + 4 H2O = 2,5-diamino-6-hydroxy-4-(5-phosphoribosylamino)-pyrimidine + formate + 2 phosphate + 3 H(+). It functions in the pathway cofactor biosynthesis; riboflavin biosynthesis; 5-amino-6-(D-ribitylamino)uracil from GTP: step 1/4. Catalyzes the conversion of GTP to 2,5-diamino-6-ribosylamino-4(3H)-pyrimidinone 5'-phosphate (DARP), formate and pyrophosphate. The sequence is that of GTP cyclohydrolase-2 from Shewanella sp. (strain ANA-3).